Here is a 309-residue protein sequence, read N- to C-terminus: Homoserine O-succinyltransferase (309 aa).

The Acyl-thioester intermediate role is filled by C142. Substrate contacts are provided by K163 and S192. The active-site Proton acceptor is the H235. E237 is an active-site residue. R249 serves as a coordination point for substrate.

It belongs to the MetA family.

The protein resides in the cytoplasm. The catalysed reaction is L-homoserine + succinyl-CoA = O-succinyl-L-homoserine + CoA. It functions in the pathway amino-acid biosynthesis; L-methionine biosynthesis via de novo pathway; O-succinyl-L-homoserine from L-homoserine: step 1/1. Transfers a succinyl group from succinyl-CoA to L-homoserine, forming succinyl-L-homoserine. This chain is Homoserine O-succinyltransferase, found in Cronobacter sakazakii (strain ATCC BAA-894) (Enterobacter sakazakii).